The following is a 142-amino-acid chain: DNA-directed RNA polymerase subunit omega (142 aa).

The tract at residues 93–142 (AWSVPEAGGDEGGDASELLDDEGEGAAAGAEPDFSEMDVPLADLADEDKI) is disordered. The segment covering 100-116 (GGDEGGDASELLDDEGE) has biased composition (acidic residues).

Belongs to the RNA polymerase subunit omega family. As to quaternary structure, the RNAP catalytic core consists of 2 alpha, 1 beta, 1 beta' and 1 omega subunit. When a sigma factor is associated with the core the holoenzyme is formed, which can initiate transcription.

It carries out the reaction RNA(n) + a ribonucleoside 5'-triphosphate = RNA(n+1) + diphosphate. Functionally, promotes RNA polymerase assembly. Latches the N- and C-terminal regions of the beta' subunit thereby facilitating its interaction with the beta and alpha subunits. The sequence is that of DNA-directed RNA polymerase subunit omega from Rhodospirillum centenum (strain ATCC 51521 / SW).